We begin with the raw amino-acid sequence, 89 residues long: Small ribosomal subunit protein bS20 (89 aa).

This sequence belongs to the bacterial ribosomal protein bS20 family.

Functionally, binds directly to 16S ribosomal RNA. This is Small ribosomal subunit protein bS20 from Helicobacter pylori (strain ATCC 700392 / 26695) (Campylobacter pylori).